The chain runs to 152 residues: D-aminoacyl-tRNA deacylase (152 aa).

Positions 142–143 match the Gly-cisPro motif, important for rejection of L-amino acids motif; it reads GP.

It belongs to the DTD family. In terms of assembly, homodimer.

The protein resides in the cytoplasm. It carries out the reaction glycyl-tRNA(Ala) + H2O = tRNA(Ala) + glycine + H(+). It catalyses the reaction a D-aminoacyl-tRNA + H2O = a tRNA + a D-alpha-amino acid + H(+). Its function is as follows. An aminoacyl-tRNA editing enzyme that deacylates mischarged D-aminoacyl-tRNAs. Also deacylates mischarged glycyl-tRNA(Ala), protecting cells against glycine mischarging by AlaRS. Acts via tRNA-based rather than protein-based catalysis; rejects L-amino acids rather than detecting D-amino acids in the active site. By recycling D-aminoacyl-tRNA to D-amino acids and free tRNA molecules, this enzyme counteracts the toxicity associated with the formation of D-aminoacyl-tRNA entities in vivo and helps enforce protein L-homochirality. The protein is D-aminoacyl-tRNA deacylase of Burkholderia lata (strain ATCC 17760 / DSM 23089 / LMG 22485 / NCIMB 9086 / R18194 / 383).